A 1259-amino-acid polypeptide reads, in one-letter code: Neural cell adhesion molecule L1 (1259 aa).

The N-terminal stretch at 1 to 19 is a signal peptide; sequence MVMMLWYVLPLLLCSPCLL. The Extracellular portion of the chain corresponds to 20-1122; it reads IQIPDEYKGH…VSTTGSFASE (1103 aa). Ig-like C2-type domains are found at residues 35–128, 138–225, 239–327, 332–419, 424–506, and 517–600; these read PVIT…HEIQ, PKET…EPID, PRLL…YYVT, PYWL…AYIY, PARI…NNVT, and TQIT…DEVE. 2 disulfide bridges follow: C57–C113 and C157–C208. N-linked (GlcNAc...) asparagine glycans are attached at residues N100, N202, N246, and N293. Cystine bridges form between C263/C311 and C353/C403. Residues N432, N489, and N504 are each glycosylated (N-linked (GlcNAc...) asparagine). A disulfide bond links C447 and C496. C538 and C590 are oxidised to a cystine. Short sequence motifs (cell attachment site) lie at residues 553–555 and 562–564; these read RGD. 5 consecutive Fibronectin type-III domains span residues 613 to 711, 716 to 809, 811 to 916, 919 to 1014, and 1016 to 1116; these read PVPH…TPEA, NPVD…SGED, PQVS…PEGV, HPEA…MALF, and KPDF…VSTT. N-linked (GlcNAc...) asparagine glycosylation occurs at N670. The segment at 697–724 is disordered; sequence GEPSPVSETVVTPEAAPEKNPVDVRGEG. The span at 712–724 shows a compositional bias: basic and acidic residues; it reads APEKNPVDVRGEG. N-linked (GlcNAc...) asparagine glycans are attached at residues N725, N776, N824, N848, N875, N968, N978, N1021, N1029, N1072, and N1106. The helical transmembrane segment at 1123 to 1145 threads the bilayer; sequence GWFIAFVSAIILLLLILLILCFI. Residues 1146–1259 are Cytoplasmic-facing; sequence KRSKGGKYSV…SPINPAVALE (114 aa). 8 positions are modified to phosphoserine: S1165, R1179, S1180, S1183, S1196, S1245, S1246, and S1250. Disordered regions lie at residues 1182–1209 and 1228–1259; these read ESDN…SDDS and IGQY…VALE. Positions 1243–1252 are enriched in polar residues; it reads NDSSGATSPI.

It belongs to the immunoglobulin superfamily. L1/neurofascin/NgCAM family. As to quaternary structure, interacts with SHTN1; the interaction occurs in axonal growth cones. Interacts with isoform 2 of BSG. Isoform 2 is predominantly found in the brain, while isoform 1 is found in the peripheral nervous system.

The protein localises to the cell membrane. The protein resides in the cell projection. Its subcellular location is the growth cone. Neural cell adhesion molecule involved in the dynamics of cell adhesion and in the generation of transmembrane signals at tyrosine kinase receptors. During brain development, critical in multiple processes, including neuronal migration, axonal growth and fasciculation, and synaptogenesis. In the mature brain, plays a role in the dynamics of neuronal structure and function, including synaptic plasticity. This chain is Neural cell adhesion molecule L1 (L1cam), found in Rattus norvegicus (Rat).